The primary structure comprises 336 residues: Speedy protein E1 (336 aa).

Residues 16 to 50 (GVDPSPPCRSLGWKRKREWSDESEEEPEKELAPEP) are disordered. Over residues 36–50 (DESEEEPEKELAPEP) the composition is skewed to acidic residues.

This sequence belongs to the Speedy/Ringo family. In terms of tissue distribution, predominantly expressed in testis and heart.

The chain is Speedy protein E1 from Homo sapiens (Human).